We begin with the raw amino-acid sequence, 172 residues long: MPRPEKVQLVAELTDRFASSTAAVLTEYRGLSVAQLNELRRALNGDAEYTVVKNTLSKLAVRNAGLTELEPLLQGPSAVAFVRGDPVKAAKSLRDFARANNALVIKGGILEGKLLSAAEVAALADLESREVLLAKVAGAANAVLARAAGLFQAPLAQVARLAEALRAKQAES.

Belongs to the universal ribosomal protein uL10 family. As to quaternary structure, part of the ribosomal stalk of the 50S ribosomal subunit. The N-terminus interacts with L11 and the large rRNA to form the base of the stalk. The C-terminus forms an elongated spine to which L12 dimers bind in a sequential fashion forming a multimeric L10(L12)X complex.

Its function is as follows. Forms part of the ribosomal stalk, playing a central role in the interaction of the ribosome with GTP-bound translation factors. The chain is Large ribosomal subunit protein uL10 from Acidothermus cellulolyticus (strain ATCC 43068 / DSM 8971 / 11B).